The chain runs to 151 residues: UPF0178 protein RD1_0321 (151 aa).

This sequence belongs to the UPF0178 family.

This is UPF0178 protein RD1_0321 from Roseobacter denitrificans (strain ATCC 33942 / OCh 114) (Erythrobacter sp. (strain OCh 114)).